Here is a 146-residue protein sequence, read N- to C-terminus: UPF0178 protein R01393 (146 aa).

This sequence belongs to the UPF0178 family.

This chain is UPF0178 protein R01393, found in Rhizobium meliloti (strain 1021) (Ensifer meliloti).